Reading from the N-terminus, the 236-residue chain is SPbeta prophage-derived uncharacterized protein YomV (236 aa).

The polypeptide is SPbeta prophage-derived uncharacterized protein YomV (yomV) (Bacillus subtilis (strain 168)).